The following is a 390-amino-acid chain: E3 ubiquitin-protein ligase At4g11680 (390 aa).

Low complexity predominate over residues 1-19 (MSSSSSTTTNTTTESDSSS). Positions 1-39 (MSSSSSTTTNTTTESDSSSLPTHIGRSNSDGIIDTTPFL) are disordered. The next 5 helical transmembrane spans lie at 109-129 (VVFL…AVLI), 142-162 (VWVV…CVEY), 212-232 (MFSF…GQTL), 244-264 (IIFL…ACVI), and 265-285 (GLAV…VADQ). An RING-type; atypical zinc finger spans residues 338 to 379 (CCICLCEYEDGVELRELPCNHHFHCTCIDKWLHINSRCPLCK).

The protein localises to the membrane. It carries out the reaction S-ubiquitinyl-[E2 ubiquitin-conjugating enzyme]-L-cysteine + [acceptor protein]-L-lysine = [E2 ubiquitin-conjugating enzyme]-L-cysteine + N(6)-ubiquitinyl-[acceptor protein]-L-lysine.. It participates in protein modification; protein ubiquitination. Its function is as follows. Mediates E2-dependent protein ubiquitination in vitro. The chain is E3 ubiquitin-protein ligase At4g11680 from Arabidopsis thaliana (Mouse-ear cress).